The following is an 802-amino-acid chain: Probable inactive leucine-rich repeat receptor-like protein kinase At3g03770 (802 aa).

An N-terminal signal peptide occupies residues 1 to 26 (MEKLYCGMPLLLLVLLLASIDGSTQL). Residues 27–391 (QSSQSQTLLR…RNKVSKVGIA (365 aa)) are Extracellular-facing. N-linked (GlcNAc...) asparagine glycosylation is found at asparagine 52 and asparagine 83. 11 LRR repeats span residues 71 to 94 (EDSVTQLHIIGDNGTHMLPKSFSI), 104 to 128 (LPDVKVLTFVSLGLWGWLPQKINRL), 129 to 152 (SSLEILNVSSNFLFGPIPHELSSL), 153 to 176 (ATLQTLILDENMFSGELPDWIDSL), 177 to 200 (PSLAVLSLRKNVLNGSLPSSLSSL), 201 to 225 (SGLRVLALANNRFNGALPDLSHLTN), 227 to 244 (QVLDLEGNSFGPLFPRLS), 245 to 268 (NKLVTLILSKNKFRSAVSAEEVSS), 269 to 293 (LYQLQHLDLSYNTFVGPFPTSLMSL), 294 to 317 (PAITYLNISHNKLTGRLSANLSCN), and 319 to 341 (QLMFVDMSSNLLTGSLPTCLKPS). N-linked (GlcNAc...) asparagine glycosylation occurs at asparagine 135. An N-linked (GlcNAc...) asparagine glycan is attached at asparagine 190. N-linked (GlcNAc...) asparagine glycosylation is found at asparagine 300 and asparagine 313. A helical transmembrane segment spans residues 392–412 (LGVTASILGVLLLAGALFVVL). At 413–802 (RRLNAKKTVT…RDSGCEEHER (390 aa)) the chain is on the cytoplasmic side. The Protein kinase domain occupies 477-759 (FESSAFMGEG…FASQVQEGWL (283 aa)). Residues 761–802 (NSNPSSNLGSPSPAASSLPPPSRLHVTTLESPRDSGCEEHER) form a disordered region. The segment covering 762 to 777 (SNPSSNLGSPSPAASS) has biased composition (low complexity). A compositionally biased stretch (basic and acidic residues) spans 791–802 (SPRDSGCEEHER).

The protein belongs to the protein kinase superfamily. Ser/Thr protein kinase family.

It localises to the cell membrane. In Arabidopsis thaliana (Mouse-ear cress), this protein is Probable inactive leucine-rich repeat receptor-like protein kinase At3g03770.